A 93-amino-acid polypeptide reads, in one-letter code: YcgL domain-containing protein Ssed_2518 (93 aa).

A YcgL domain is found at 1-85 (MICAVYKSRR…PKVNLLEQHK (85 aa)).

In Shewanella sediminis (strain HAW-EB3), this protein is YcgL domain-containing protein Ssed_2518.